A 267-amino-acid polypeptide reads, in one-letter code: MEMTKAIVKENPRIEEIKELLEVAESREGLLTIFARCTVYYEGRAKSELGEGDRIIIIKPDGSFLIHQKKKREPVNWQPPGSKVKMEGNSLISIRRNPKETLKVDIIEAYAAVLFMAEDYEELTLTGSEAEMAELIFQNPNVIEEGFKPMFREKPIKHGIVDVLGVDREGNIVVLELKRRRADLHAVSQLKRYVDALKEEHGNKVRGILVAPSLTEGAKKLLEKLGLEFRKLEPPKKGKKKSSKQKTLDFLNDTVRITGASPPEAIQ.

This sequence belongs to the NucS endonuclease family.

It localises to the cytoplasm. Functionally, cleaves both 3' and 5' ssDNA extremities of branched DNA structures. This Pyrococcus furiosus (strain ATCC 43587 / DSM 3638 / JCM 8422 / Vc1) protein is Endonuclease NucS.